The sequence spans 87 residues: Small ribosomal subunit protein uS15c (87 aa).

This sequence belongs to the universal ribosomal protein uS15 family. As to quaternary structure, part of the 30S ribosomal subunit.

It localises to the plastid. Its subcellular location is the chloroplast. The polypeptide is Small ribosomal subunit protein uS15c (rps15) (Solanum bulbocastanum (Wild potato)).